Consider the following 593-residue polypeptide: MLO-like protein 8 (593 aa).

Over 1–46 the chain is Extracellular; that stretch reads MGIIDGSLLRRLICLCLWCLLGGGVTVVTAEDEKKVVHKQLNQTPT. The helical transmembrane segment at 47–67 threads the bilayer; the sequence is WAVAAVCTFFIVVSVLLEKLL. The Cytoplasmic segment spans residues 68-92; the sequence is HKVGKVLWDRHKTALLDALEKIKAE. A helical transmembrane segment spans residues 93-113; the sequence is LMVLGFISLLLTFGQTYILDI. Over 114-181 the chain is Extracellular; the sequence is CIPSHVARTM…ISAEALHQLH (68 aa). A helical membrane pass occupies residues 182-202; the sequence is ILIFFLAIFHVLYSFLTMMLG. Residues 203–304 lie on the Cytoplasmic side of the membrane; that stretch reads RLKIRGWKHW…IKRSLEDDFK (102 aa). A helical transmembrane segment spans residues 305 to 325; the sequence is VVVGVSPVLWGSFVLFLLLNI. Residue D326 is a topological domain, extracellular. The helical transmembrane segment at 327–347 threads the bilayer; that stretch reads GFKMMFIGTAIPVIIILAVGT. At 348–393 the chain is on the cytoplasmic side; it reads KLQAIMTRMALGITDRHAVVQGMPLVQGNDEYFWFGRPHLILHLMH. A helical transmembrane segment spans residues 394–414; sequence FALFQNAFQITYFFWIWYSFG. Over 415 to 430 the chain is Extracellular; that stretch reads SDSCYHPNFKIALVKV. The chain crosses the membrane as a helical span at residues 431–451; it reads AIALGVLCLCSYITLPLYALV. Residues 452-593 lie on the Cytoplasmic side of the membrane; it reads TQMGSRMKKS…APSNESSQDR (142 aa). The tract at residues 465–486 is calmodulin-binding; it reads EQTSKALKKWRMAVKKKKGVKA. Residues 481-593 form a disordered region; the sequence is KKGVKATTKR…APSNESSQDR (113 aa). The span at 489 to 512 shows a compositional bias: low complexity; sequence KRLGGDGSASPTASTVRSTSSVRS. A compositionally biased stretch (acidic residues) spans 528–539; it reads LDPETSDLDTDN. The span at 567–579 shows a compositional bias: basic and acidic residues; the sequence is TSRDTETDSKEFS.

Belongs to the MLO family.

The protein localises to the membrane. Functionally, may be involved in modulation of pathogen defense and leaf cell death. Activity seems to be regulated by Ca(2+)-dependent calmodulin binding and seems not to require heterotrimeric G proteins. This is MLO-like protein 8 (MLO8) from Arabidopsis thaliana (Mouse-ear cress).